The primary structure comprises 357 residues: DNA replication and repair protein RecF (357 aa).

30 to 37 (GANGSGKT) provides a ligand contact to ATP.

This sequence belongs to the RecF family.

It is found in the cytoplasm. Functionally, the RecF protein is involved in DNA metabolism; it is required for DNA replication and normal SOS inducibility. RecF binds preferentially to single-stranded, linear DNA. It also seems to bind ATP. The polypeptide is DNA replication and repair protein RecF (Enterobacter sp. (strain 638)).